The following is a 101-amino-acid chain: Nucleoid-associated protein Bind_0255 (101 aa).

This sequence belongs to the YbaB/EbfC family. Homodimer.

The protein resides in the cytoplasm. The protein localises to the nucleoid. Binds to DNA and alters its conformation. May be involved in regulation of gene expression, nucleoid organization and DNA protection. The protein is Nucleoid-associated protein Bind_0255 of Beijerinckia indica subsp. indica (strain ATCC 9039 / DSM 1715 / NCIMB 8712).